A 296-amino-acid polypeptide reads, in one-letter code: ATP synthase peripheral stalk subunit OSCP, mitochondrial (296 aa).

This sequence belongs to the ATPase delta chain family. As to quaternary structure, component of the ATP synthase complex composed at least of ATP5F1A/subunit alpha, ATP5F1B/subunit beta, ATP5MC1/subunit c (homooctomer), MT-ATP6/subunit a, MT-ATP8/subunit 8, ATP5ME/subunit e, ATP5MF/subunit f, ATP5MG/subunit g, ATP5MK/subunit k, ATP5MJ/subunit j, ATP5F1C/subunit gamma, ATP5F1D/subunit delta, ATP5F1E/subunit epsilon, ATP5PF/subunit F6, ATP5PB/subunit b, ATP5PD/subunit d, ATP5PO/subunit OSCP. ATP synthase complex consists of a soluble F(1) head domain (subunits alpha(3) and beta(3)) - the catalytic core - and a membrane F(0) domain - the membrane proton channel (subunits c, a, 8, e, f, g, k and j). These two domains are linked by a central stalk (subunits gamma, delta, and epsilon) rotating inside the F1 region and a stationary peripheral stalk (subunits F6, b, d, and OSCP).

It localises to the mitochondrion. It is found in the mitochondrion inner membrane. Functionally, subunit OSCP, of the mitochondrial membrane ATP synthase complex (F(1)F(0) ATP synthase or Complex V) that produces ATP from ADP in the presence of a proton gradient across the membrane which is generated by electron transport complexes of the respiratory chain. ATP synthase complex consist of a soluble F(1) head domain - the catalytic core - and a membrane F(1) domain - the membrane proton channel. These two domains are linked by a central stalk rotating inside the F(1) region and a stationary peripheral stalk. During catalysis, ATP synthesis in the catalytic domain of F(1) is coupled via a rotary mechanism of the central stalk subunits to proton translocation. In vivo, can only synthesize ATP although its ATP hydrolase activity can be activated artificially in vitro. Part of the complex F(0) domain. Part of the complex F(0) domain and the peripheric stalk, which acts as a stator to hold the catalytic alpha(3)beta(3) subcomplex and subunit a/ATP6 static relative to the rotary elements. The protein is ATP synthase peripheral stalk subunit OSCP, mitochondrial of Dictyostelium discoideum (Social amoeba).